Consider the following 369-residue polypeptide: MDLKFNNSRKYVSISVPSKTQAMSPHIKSVEDVVVLGVNLSKFSKLTQFLICVAGVFVFYLIYGYLQELIFSVEGFKPYGWYLTLVQFAFYSVFGLIELQLTQDRRRRIPGKTYMLIAFLTVGTMGLSNTSLGYLNYPTQVIFKCCKLIPVMLGGVFIQGKRYNLADVSAAVCMSLGLIWFTLADSTIAPNFNLTGVMLISLALCADAVIGNVQEKAMKLHNASNSEMVLYSYSIGFVYILLGLSCTSGLGPAVAFCSKNPVGTYGYAFLFSLTGYFGISFVLALIKIFGALLAVTVTTGRKAMTVVLSFLFFAKPFTFQYIWSGLLVVLGIFLNVYSKNMDKIRLPSVYNMIKKAMDMKKSRTLAQTV.

Residue Asn39 is glycosylated (N-linked (GlcNAc...) asparagine). 6 helical membrane passes run 46–66 (LTQFLICVAGVFVFYLIYGYL), 79–99 (YGWYLTLVQFAFYSVFGLIEL), 115–135 (MLIAFLTVGTMGLSNTSLGYL), 138–158 (PTQVIFKCCKLIPVMLGGVFI), 168–188 (VSAAVCMSLGLIWFTLADSTI), and 191–211 (NFNLTGVMLISLALCADAVIG). The N-linked (GlcNAc...) asparagine glycan is linked to Asn222. 4 helical membrane passes run 235 to 255 (IGFVYILLGLSCTSGLGPAVA), 266 to 285 (GYAFLFSLTGYFGISFVLAL), 292 to 314 (LLAVTVTTGRKAMTVVLSFLFFA), and 317 to 337 (FTFQYIWSGLLVVLGIFLNVY).

The protein belongs to the nucleotide-sugar transporter family. SLC35B subfamily.

The protein localises to the golgi apparatus membrane. It carries out the reaction 3'-phosphoadenylyl sulfate(in) + adenosine 3',5'-bisphosphate(out) = 3'-phosphoadenylyl sulfate(out) + adenosine 3',5'-bisphosphate(in). In terms of biological role, probably functions as a 3'-phosphoadenylyl sulfate:adenosine 3',5'-bisphosphate antiporter at the Golgi membranes. Mediates the transport from the cytosol into the lumen of the Golgi of 3'-phosphoadenylyl sulfate/adenosine 3'-phospho 5'-phosphosulfate (PAPS), a universal sulfuryl donor for sulfation events that take place in that compartment. In Mus musculus (Mouse), this protein is Adenosine 3'-phospho 5'-phosphosulfate transporter 2.